A 281-amino-acid polypeptide reads, in one-letter code: MFQWLMQALMLPLLLLPLGRAAPKDGVARLDPEVQQQLTPNPFQPGPEQLRHLQNYLKGLEKMEEDPEHMDREQVLLSLFALHDYDQNGQLDGLELLSMLTAALAPGAAHFPINPVILVVDSVLETQDLDGDGLMTPAELINFPEVPKHTESLPPALQEPQPAGSQPLLANSPLQSETQQSLGTKEEIRGQVEAKRASLEPEQEAGHQTEGKVDTLSPEEEARGQAESEGDVPGPREGAEEQVEIKDNEGEAKELLVETLESLNTPNEAEAHSIQLENDEI.

An N-terminal signal peptide occupies residues methionine 1–alanine 21. EF-hand domains follow at residues aspartate 71–proline 106 and proline 115–threonine 150. Ca(2+) contacts are provided by aspartate 84, aspartate 86, asparagine 88, glutamine 90, glutamate 95, aspartate 128, aspartate 130, aspartate 132, and glutamate 139. The disordered stretch occupies residues lysine 148 to isoleucine 281. The span at leucine 168–glycine 183 shows a compositional bias: polar residues. A compositionally biased stretch (basic and acidic residues) spans threonine 184 to valine 213. Phosphoserine is present on residues serine 217 and serine 228. A compositionally biased stretch (basic and acidic residues) spans glutamate 237–leucine 256.

In terms of processing, probably digested extracellularly by an unknown serine protease generating extremely hydrophobic bioactive peptides.

It is found in the secreted. Functionally, mediates cell-cell adhesion in a calcium-dependent manner. Able to inhibit growth in several cell lines. This chain is Cell growth regulator with EF hand domain protein 1, found in Mus musculus (Mouse).